The following is a 631-amino-acid chain: Dolichyl-diphosphooligosaccharide--protein glycosyltransferase subunit 2 (631 aa).

Residues 1-22 (MALPGSSTVFLLALTIIASTQA) form the signal peptide. At 23–540 (LTPTHYLTKH…REPEKRPPTV (518 aa)) the chain is on the lumenal side. An N-linked (GlcNAc...) asparagine glycan is attached at asparagine 106. Lysine 154 is covalently cross-linked (Glycyl lysine isopeptide (Lys-Gly) (interchain with G-Cter in ubiquitin)). A helical membrane pass occupies residues 541–561 (VSNTFTALILSPLLLLFALWI). At 562–571 (RIGANVSNFT) the chain is on the cytoplasmic side. The chain crosses the membrane as a helical span at residues 572–592 (FAPSTIVFHLGHAAMLGLMYV). Topologically, residues 593–596 (YWTQ) are lumenal. Residues 597-617 (LNMFQTLKYLAILGSVTFLAG) form a helical membrane-spanning segment. Residues 618–631 (NRMLAQQAIKRTAH) lie on the Cytoplasmic side of the membrane.

Belongs to the SWP1 family. As to quaternary structure, component of the oligosaccharyltransferase (OST) complex. OST exists in two different complex forms which contain common core subunits RPN1, RPN2, OST48, OST4, DAD1 and TMEM258, either STT3A or STT3B as catalytic subunits, and form-specific accessory subunits. STT3A complex assembly occurs through the formation of 3 subcomplexes. Subcomplex 1 contains RPN1 and TMEM258, subcomplex 2 contains the STT3A-specific subunits STT3A, DC2/OSTC, and KCP2 as well as the core subunit OST4, and subcomplex 3 contains RPN2, DAD1, and OST48. The STT3A complex can form stable complexes with the Sec61 complex or with both the Sec61 and TRAP complexes. Interacts with DDI2. Interacts with TMEM35A/NACHO.

The protein resides in the endoplasmic reticulum. It localises to the endoplasmic reticulum membrane. Its pathway is protein modification; protein glycosylation. Functionally, subunit of the oligosaccharyl transferase (OST) complex that catalyzes the initial transfer of a defined glycan (Glc(3)Man(9)GlcNAc(2) in eukaryotes) from the lipid carrier dolichol-pyrophosphate to an asparagine residue within an Asn-X-Ser/Thr consensus motif in nascent polypeptide chains, the first step in protein N-glycosylation. N-glycosylation occurs cotranslationally and the complex associates with the Sec61 complex at the channel-forming translocon complex that mediates protein translocation across the endoplasmic reticulum (ER). All subunits are required for a maximal enzyme activity. The protein is Dolichyl-diphosphooligosaccharide--protein glycosyltransferase subunit 2 of Bos taurus (Bovine).